Consider the following 397-residue polypeptide: Acetate kinase 2 (397 aa).

Residue N10 participates in Mg(2+) binding. K17 contacts ATP. R90 contributes to the substrate binding site. Catalysis depends on D147, which acts as the Proton donor/acceptor. Residues 207 to 211 (HLGNG), 281 to 283 (DAR), and 329 to 333 (GIGEN) each bind ATP. E385 contributes to the Mg(2+) binding site.

This sequence belongs to the acetokinase family. In terms of assembly, homodimer. It depends on Mg(2+) as a cofactor. Requires Mn(2+) as cofactor.

The protein resides in the cytoplasm. It catalyses the reaction acetate + ATP = acetyl phosphate + ADP. The protein operates within metabolic intermediate biosynthesis; acetyl-CoA biosynthesis; acetyl-CoA from acetate: step 1/2. Functionally, catalyzes the formation of acetyl phosphate from acetate and ATP. Can also catalyze the reverse reaction. The chain is Acetate kinase 2 from Aliivibrio fischeri (strain ATCC 700601 / ES114) (Vibrio fischeri).